A 496-amino-acid polypeptide reads, in one-letter code: Glutamate--tRNA ligase (496 aa).

Residues 10 to 20 (PSPTGPLHIGG) carry the 'HIGH' region motif. Residues 251 to 255 (KMSKR) carry the 'KMSKS' region motif. Lysine 254 contributes to the ATP binding site.

Belongs to the class-I aminoacyl-tRNA synthetase family. Glutamate--tRNA ligase type 1 subfamily. As to quaternary structure, monomer.

It is found in the cytoplasm. It catalyses the reaction tRNA(Glu) + L-glutamate + ATP = L-glutamyl-tRNA(Glu) + AMP + diphosphate. Its function is as follows. Catalyzes the attachment of glutamate to tRNA(Glu) in a two-step reaction: glutamate is first activated by ATP to form Glu-AMP and then transferred to the acceptor end of tRNA(Glu). The polypeptide is Glutamate--tRNA ligase (Heliobacterium modesticaldum (strain ATCC 51547 / Ice1)).